A 513-amino-acid polypeptide reads, in one-letter code: Lysine--tRNA ligase (513 aa).

Glutamate 423 and glutamate 430 together coordinate Mg(2+).

It belongs to the class-II aminoacyl-tRNA synthetase family. As to quaternary structure, homodimer. It depends on Mg(2+) as a cofactor.

It localises to the cytoplasm. The catalysed reaction is tRNA(Lys) + L-lysine + ATP = L-lysyl-tRNA(Lys) + AMP + diphosphate. This is Lysine--tRNA ligase from Anaeromyxobacter dehalogenans (strain 2CP-C).